The chain runs to 152 residues: Aspartate carbamoyltransferase regulatory chain (152 aa).

Positions 109, 114, 138, and 141 each coordinate Zn(2+).

This sequence belongs to the PyrI family. Contains catalytic and regulatory chains. It depends on Zn(2+) as a cofactor.

Its function is as follows. Involved in allosteric regulation of aspartate carbamoyltransferase. This is Aspartate carbamoyltransferase regulatory chain from Proteus mirabilis (strain HI4320).